The chain runs to 539 residues: MGHQESPLTRAAAGGAAYIKRLRKVLSWRELGDGHGNLEAEASPGSVAVITRAAPRRATRSARLPASRPTRLCRQARLGTDHPPARAPRGNRFARKRNSAGQITIQGPAPPHLGARRRDEARGARAAPLLLPPPPAAMETGKENGARRGTKSPERKRRSPVQRVLCEKLRPAAQAMDPAGAEVPGEAFLARRRPDGGGGDVPARPRYSLLAEIGRGSYGVVYEAVAGRSGARVAVKKIRCDAPENVELALAEFWALTSLKRRHQNIVQFEECVLQRNGLAQRMSHGNKNSQLYLRLVETSLKGERILGYAEEPCYLWFVMEYCEGGDLNQYVLSRRPDPATNKSFMLQLTSAIAFLHKNHIVHRDLKPDNILITERSGTPILKVADFGLSKVCAGLAPRGKEGNQDNKNVNVNKYWLSSACGSDFYMAPEVWEGHYTAKADIFALGIIIWAMIERITFIDSETKKELLGTYIKQGTEIVPVGEALLENPKMELHIPQKRRTSMSEGVKQLLKDMLAANPQDRPDAFELETRMDQVTCAA.

A disordered region spans residues 103–161; that stretch reads ITIQGPAPPHLGARRRDEARGARAAPLLLPPPPAAMETGKENGARRGTKSPERKRRSPV. The span at 148–160 shows a compositional bias: basic residues; it reads RGTKSPERKRRSP. The 329-residue stretch at 207-535 folds into the Protein kinase domain; it reads YSLLAEIGRG…FELETRMDQV (329 aa). ATP is bound by residues 213–221 and lysine 236; that span reads IGRGSYGVV. Residue aspartate 365 is the Proton acceptor of the active site.

It belongs to the protein kinase superfamily. Ser/Thr protein kinase family. As to quaternary structure, interacts with PDLIM1/CLP-36. Post-translationally, autophosphorylated.

The protein localises to the nucleus. The protein resides in the nucleolus. It is found in the cytoplasm. The enzyme catalyses L-seryl-[protein] + ATP = O-phospho-L-seryl-[protein] + ADP + H(+). The catalysed reaction is L-threonyl-[protein] + ATP = O-phospho-L-threonyl-[protein] + ADP + H(+). This Mus musculus (Mouse) protein is Serine/threonine-protein kinase 35 (Stk35).